Consider the following 334-residue polypeptide: Glyceraldehyde-3-phosphate dehydrogenase (334 aa).

NAD(+) contacts are provided by residues 12 to 13 (RI), D35, R79, and S121. D-glyceraldehyde 3-phosphate is bound by residues 152-154 (SCT), T183, R198, 211-212 (TG), and R234. C153 serves as the catalytic Nucleophile. N315 is an NAD(+) binding site.

Belongs to the glyceraldehyde-3-phosphate dehydrogenase family. In terms of assembly, homotetramer.

It localises to the cytoplasm. The enzyme catalyses D-glyceraldehyde 3-phosphate + phosphate + NAD(+) = (2R)-3-phospho-glyceroyl phosphate + NADH + H(+). The protein operates within carbohydrate degradation; glycolysis; pyruvate from D-glyceraldehyde 3-phosphate: step 1/5. Its function is as follows. Catalyzes the oxidative phosphorylation of glyceraldehyde 3-phosphate (G3P) to 1,3-bisphosphoglycerate (BPG) using the cofactor NAD. The first reaction step involves the formation of a hemiacetal intermediate between G3P and a cysteine residue, and this hemiacetal intermediate is then oxidized to a thioester, with concomitant reduction of NAD to NADH. The reduced NADH is then exchanged with the second NAD, and the thioester is attacked by a nucleophilic inorganic phosphate to produce BPG. This chain is Glyceraldehyde-3-phosphate dehydrogenase (gap), found in Corynebacterium glutamicum (strain ATCC 13032 / DSM 20300 / JCM 1318 / BCRC 11384 / CCUG 27702 / LMG 3730 / NBRC 12168 / NCIMB 10025 / NRRL B-2784 / 534).